The primary structure comprises 547 residues: Serine/threonine-protein kinase pkn3 (547 aa).

Residues 18-288 enclose the Protein kinase domain; sequence YRVEALIGEG…EAFKAELQAV (271 aa). ATP-binding positions include 24–32 and lysine 47; that span reads IGEGGMGKV. The Proton acceptor role is filled by aspartate 142. The span at 290-299 shows a compositional bias: basic and acidic residues; that stretch reads KERRRMDSAP. The tract at residues 290–327 is disordered; it reads KERRRMDSAPRRSANSSAVLAPLPRKSAASPQSDVRDA.

Belongs to the protein kinase superfamily. Ser/Thr protein kinase family.

The catalysed reaction is L-seryl-[protein] + ATP = O-phospho-L-seryl-[protein] + ADP + H(+). The enzyme catalyses L-threonyl-[protein] + ATP = O-phospho-L-threonyl-[protein] + ADP + H(+). In Myxococcus xanthus, this protein is Serine/threonine-protein kinase pkn3 (pkn3).